The primary structure comprises 598 residues: Aspartate--tRNA(Asp/Asn) ligase (598 aa).

Glutamate 177 is a binding site for L-aspartate. The aspartate stretch occupies residues 201–204 (QLFK). Arginine 223 is an L-aspartate binding site. Residues 223–225 (RDE) and glutamine 232 contribute to the ATP site. Histidine 456 lines the L-aspartate pocket. Residue glutamate 493 participates in ATP binding. Arginine 500 serves as a coordination point for L-aspartate. 545-548 (GLDR) lines the ATP pocket.

It belongs to the class-II aminoacyl-tRNA synthetase family. Type 1 subfamily. In terms of assembly, homodimer.

It localises to the cytoplasm. It carries out the reaction tRNA(Asx) + L-aspartate + ATP = L-aspartyl-tRNA(Asx) + AMP + diphosphate. Functionally, aspartyl-tRNA synthetase with relaxed tRNA specificity since it is able to aspartylate not only its cognate tRNA(Asp) but also tRNA(Asn). Reaction proceeds in two steps: L-aspartate is first activated by ATP to form Asp-AMP and then transferred to the acceptor end of tRNA(Asp/Asn). This is Aspartate--tRNA(Asp/Asn) ligase from Prochlorococcus marinus (strain AS9601).